A 625-amino-acid polypeptide reads, in one-letter code: Glutamine--fructose-6-phosphate aminotransferase [isomerizing] (625 aa).

Cys-2 functions as the Nucleophile; for GATase activity in the catalytic mechanism. The Glutamine amidotransferase type-2 domain occupies Cys-2–Asp-229. SIS domains follow at residues Ile-296–Asn-436 and Leu-470–Pro-615. The active-site For Fru-6P isomerization activity is the Lys-620.

In terms of assembly, homodimer.

The protein localises to the cytoplasm. The catalysed reaction is D-fructose 6-phosphate + L-glutamine = D-glucosamine 6-phosphate + L-glutamate. Its function is as follows. Catalyzes the first step in hexosamine metabolism, converting fructose-6P into glucosamine-6P using glutamine as a nitrogen source. The polypeptide is Glutamine--fructose-6-phosphate aminotransferase [isomerizing] (Corynebacterium diphtheriae (strain ATCC 700971 / NCTC 13129 / Biotype gravis)).